The chain runs to 152 residues: Ribonuclease H (152 aa).

An RNase H type-1 domain is found at 1 to 142 (MDSKVVIYTD…ADKLAVQGRE (142 aa)). Positions 10, 48, 70, and 134 each coordinate Mg(2+).

This sequence belongs to the RNase H family. In terms of assembly, monomer. Requires Mg(2+) as cofactor.

The protein localises to the cytoplasm. It carries out the reaction Endonucleolytic cleavage to 5'-phosphomonoester.. In terms of biological role, endonuclease that specifically degrades the RNA of RNA-DNA hybrids. The chain is Ribonuclease H from Rickettsia typhi (strain ATCC VR-144 / Wilmington).